The chain runs to 121 residues: MKISSKQPRKQRKFLYNAPLHVRQKLMSAPLSRELREKYKVRNLPVRVGDKVRIMRGDYKGHEGKVVEVDLKRYRIYVEGATLRKTNGTEVFYPIHPSNVMIIELNLEDEKRKKIIERRAG.

The protein belongs to the universal ribosomal protein uL24 family. In terms of assembly, part of the 50S ribosomal subunit.

In terms of biological role, one of two assembly initiator proteins, it binds directly to the 5'-end of the 23S rRNA, where it nucleates assembly of the 50S subunit. Functionally, located at the polypeptide exit tunnel on the outside of the subunit. The sequence is that of Large ribosomal subunit protein uL24 from Pyrococcus furiosus (strain ATCC 43587 / DSM 3638 / JCM 8422 / Vc1).